Reading from the N-terminus, the 122-residue chain is Large ribosomal subunit protein uL14 (122 aa).

It belongs to the universal ribosomal protein uL14 family. Part of the 50S ribosomal subunit. Forms a cluster with proteins L3 and L19. In the 70S ribosome, L14 and L19 interact and together make contacts with the 16S rRNA in bridges B5 and B8.

In terms of biological role, binds to 23S rRNA. Forms part of two intersubunit bridges in the 70S ribosome. This is Large ribosomal subunit protein uL14 from Xylella fastidiosa (strain M23).